The sequence spans 584 residues: Zinc finger and BTB domain-containing protein 7A (584 aa).

Residues 34 to 101 (CDVVILVEGR…AYTATLTVST (68 aa)) form the BTB domain. The segment at 220-313 (YGPGPPAERP…EDGDGPDVDG (94 aa)) is disordered. Positions 277-584 (EEEAASLSEA…TDGNFTAGLA (308 aa)) are mediates interaction with KHDRBS1. The segment covering 281–290 (ASLSEAAPEP) has biased composition (low complexity). Phosphoserine is present on residues S337 and S341. The tract at residues 349 to 584 (MDYYLKYFSG…TDGNFTAGLA (236 aa)) is mediates interaction with RELA. The interval 377–584 (RAKAFQKCPI…TDGNFTAGLA (208 aa)) is mediates interaction with SMAD4. 2 C2H2-type zinc fingers span residues 382 to 404 (QKCP…IRTH) and 410 to 432 (YECN…MRKH). A Glycyl lysine isopeptide (Lys-Gly) (interchain with G-Cter in SUMO2) cross-link involves residue K436. Residues 438–460 (YLCQQCGAAFAHNYDLKNHMRVH) form a C2H2-type 3 zinc finger. The C2H2-type 4; atypical zinc finger occupies 466–490 (YQCDSCCKTFVRSDHLHRHLKKDGC). The tract at residues 486 to 584 (KKDGCNGVPS…TDGNFTAGLA (99 aa)) is disordered. Over residues 505–527 (GGAPDPSPGATATPGAPAQPSSP) the composition is skewed to low complexity. A phosphoserine mark is found at S511, S525, and S526. A compositionally biased stretch (basic and acidic residues) spans 528 to 540 (DARRNGQEKHFKD). K539 is covalently cross-linked (Glycyl lysine isopeptide (Lys-Gly) (interchain with G-Cter in SUMO2)). S549 is subject to Phosphoserine. Residues 560 to 572 (GAGGGGDSGGGPG) are compositionally biased toward gly residues.

As to quaternary structure, homodimer. Interacts with BCL6. Interacts with RELA; involved in the control by RELA of the accessibility of target gene promoters. Interacts with AR (via NR LBD domain); the interaction is direct and androgen-dependent. Interacts with NCOR1. Interacts with NCOR2. Interacts with SMAD4; the interaction is direct and stimulated by TGFB1. Interacts with HDAC1. Interacts with SP1; ZBTB7A prevents the binding to GC-rich motifs in promoters and represses the transcriptional activity of SP1. Interacts with the DNA-dependent protein kinase complex/DNA-PKc. Interacts with KHDRBS1; negatively regulates KHDRBS1 splicing activity. Post-translationally, sumoylated. Undergoes sumoylation with SUMO1 that may regulate its transcriptional activity. In terms of tissue distribution, widely expressed. In normal thymus, expressed in medullary epithelial cells and Hassle's corpuscles (at protein level). In tonsil, expressed in squamous epithelium and germinal center lymphocytes (at protein level). Up-regulated in a subset of lymphomas, as well as in a subset of breast, lung, colon, prostate and bladder carcinomas (at protein level). Expressed in adipose tissues.

It localises to the nucleus. In terms of biological role, transcription factor that represses the transcription of a wide range of genes involved in cell proliferation and differentiation. Directly and specifically binds to the consensus sequence 5'-[GA][CA]GACCCCCCCCC-3' and represses transcription both by regulating the organization of chromatin and through the direct recruitment of transcription factors to gene regulatory regions. Negatively regulates SMAD4 transcriptional activity in the TGF-beta signaling pathway through these two mechanisms. That is, recruits the chromatin regulator HDAC1 to the SMAD4-DNA complex and in parallel prevents the recruitment of the transcriptional activators CREBBP and EP300. Collaborates with transcription factors like RELA to modify the accessibility of gene transcription regulatory regions to secondary transcription factors. Also directly interacts with transcription factors like SP1 to prevent their binding to DNA. Functions as an androgen receptor/AR transcriptional corepressor by recruiting NCOR1 and NCOR2 to the androgen response elements/ARE on target genes. Thereby, negatively regulates androgen receptor signaling and androgen-induced cell proliferation. Involved in the switch between fetal and adult globin expression during erythroid cells maturation. Through its interaction with the NuRD complex regulates chromatin at the fetal globin genes to repress their transcription. Specifically represses the transcription of the tumor suppressor ARF isoform from the CDKN2A gene. Efficiently abrogates E2F1-dependent CDKN2A transactivation. Regulates chondrogenesis through the transcriptional repression of specific genes via a mechanism that also requires histone deacetylation. Regulates cell proliferation through the transcriptional regulation of genes involved in glycolysis. Involved in adipogenesis through the regulation of genes involved in adipocyte differentiation. Plays a key role in the differentiation of lymphoid progenitors into B and T lineages. Promotes differentiation towards the B lineage by inhibiting the T-cell instructive Notch signaling pathway through the specific transcriptional repression of Notch downstream target genes. Also regulates osteoclast differentiation. May also play a role, independently of its transcriptional activity, in double-strand break repair via classical non-homologous end joining/cNHEJ. Recruited to double-strand break sites on damage DNA, interacts with the DNA-dependent protein kinase complex and directly regulates its stability and activity in DNA repair. May also modulate the splicing activity of KHDRBS1 toward BCL2L1 in a mechanism which is histone deacetylase-dependent and thereby negatively regulates the pro-apoptotic effect of KHDRBS1. In Homo sapiens (Human), this protein is Zinc finger and BTB domain-containing protein 7A.